The chain runs to 342 residues: Holliday junction branch migration complex subunit RuvB (342 aa).

The large ATPase domain (RuvB-L) stretch occupies residues 1–181 (MENRMVTPFD…FGMLCAMEFY (181 aa)). ATP contacts are provided by residues leucine 20, arginine 21, glycine 62, lysine 65, threonine 66, threonine 67, 128 to 130 (EDY), arginine 171, tyrosine 181, and arginine 218. Threonine 66 provides a ligand contact to Mg(2+). The segment at 182–252 (TDEELMEIVV…GAKAALDLLE (71 aa)) is small ATPAse domain (RuvB-S). A head domain (RuvB-H) region spans residues 255–342 (KEGLDKIDNK…KDNQVSIFNK (88 aa)). The DNA site is built by arginine 310 and arginine 315.

It belongs to the RuvB family. Homohexamer. Forms an RuvA(8)-RuvB(12)-Holliday junction (HJ) complex. HJ DNA is sandwiched between 2 RuvA tetramers; dsDNA enters through RuvA and exits via RuvB. An RuvB hexamer assembles on each DNA strand where it exits the tetramer. Each RuvB hexamer is contacted by two RuvA subunits (via domain III) on 2 adjacent RuvB subunits; this complex drives branch migration. In the full resolvosome a probable DNA-RuvA(4)-RuvB(12)-RuvC(2) complex forms which resolves the HJ.

It is found in the cytoplasm. The catalysed reaction is ATP + H2O = ADP + phosphate + H(+). The RuvA-RuvB-RuvC complex processes Holliday junction (HJ) DNA during genetic recombination and DNA repair, while the RuvA-RuvB complex plays an important role in the rescue of blocked DNA replication forks via replication fork reversal (RFR). RuvA specifically binds to HJ cruciform DNA, conferring on it an open structure. The RuvB hexamer acts as an ATP-dependent pump, pulling dsDNA into and through the RuvAB complex. RuvB forms 2 homohexamers on either side of HJ DNA bound by 1 or 2 RuvA tetramers; 4 subunits per hexamer contact DNA at a time. Coordinated motions by a converter formed by DNA-disengaged RuvB subunits stimulates ATP hydrolysis and nucleotide exchange. Immobilization of the converter enables RuvB to convert the ATP-contained energy into a lever motion, pulling 2 nucleotides of DNA out of the RuvA tetramer per ATP hydrolyzed, thus driving DNA branch migration. The RuvB motors rotate together with the DNA substrate, which together with the progressing nucleotide cycle form the mechanistic basis for DNA recombination by continuous HJ branch migration. Branch migration allows RuvC to scan DNA until it finds its consensus sequence, where it cleaves and resolves cruciform DNA. In Clostridium botulinum (strain ATCC 19397 / Type A), this protein is Holliday junction branch migration complex subunit RuvB.